The following is a 189-amino-acid chain: MKTLAPSYLKHQFLIAMPHMADPNFAQTLTYIVEHNEHGAMGLVVNRPQELSLADILEQLRPDETPPASTLQVPIYQGGPVQTDRGFVLHSSECSFQASVALEGLSLTTSQDILLAIAAGVGPKQSLITLGYAGWEAGQLEAELADNAWLNCPFDPEIVFGMASDLRLEAAAASLGINLHLLTSQAGHA.

This sequence belongs to the UPF0301 (AlgH) family.

The polypeptide is UPF0301 protein PP_4995 (Pseudomonas putida (strain ATCC 47054 / DSM 6125 / CFBP 8728 / NCIMB 11950 / KT2440)).